A 110-amino-acid polypeptide reads, in one-letter code: Acid stress chaperone HdeA (110 aa).

A signal peptide spans 1 to 21 (MKKVLGVILGGLLLLPVVSNA). A disulfide bond links cysteine 39 and cysteine 87.

It belongs to the HdeA family.

Its subcellular location is the periplasm. Its function is as follows. Required for optimal acid stress protection. Exhibits a chaperone-like activity only at low pH by suppressing non-specifically the aggregation of denaturated periplasmic proteins. This chain is Acid stress chaperone HdeA, found in Escherichia coli O157:H7.